The chain runs to 195 residues: Heterogeneous nuclear ribonucleoprotein A/B (195 aa).

The segment at 1–23 (EEVADGQAHGEXVYREEHHEGEK) is disordered. Basic and acidic residues predominate over residues 12–23 (XVYREEHHEGEK). Positions 32–48 (EETKLFVGALSWETTEK) constitute an RRM domain. Asymmetric dimethylarginine is present on residues Arg119 and Arg122. The residue at position 173 (Ser173) is a Phosphoserine; by CK2.

Extensively phosphorylated on tyrosine residues.

The protein resides in the cytoplasm. The protein localises to the nucleus. Functionally, may regulate mRNA translation and stability. It binds to poly(A) and poly(U) regions of RNA. This binding is inhibited when the protein is phosphorylated. This chain is Heterogeneous nuclear ribonucleoprotein A/B, found in Artemia salina (Brine shrimp).